Consider the following 592-residue polypeptide: Vacuolin-B (592 aa).

Residues 1–30 show a composition bias toward polar residues; the sequence is MIESSSFMKKTSSENSIGSRSNIHEASTFS. Residues 1–35 are disordered; sequence MIESSSFMKKTSSENSIGSRSNIHEASTFSSEHEN. Residues 480-534 are a coiled coil; that stretch reads KTTEARLKAETDNIALEQKGKAIIAEAQAKLESAQKQAQALLITAEAQKKVQEMQ. Positions 491–555 are oligomerization domain; it reads DNIALEQKGK…EIELAKIKSE (65 aa).

The protein belongs to the vacuolin family. As to quaternary structure, homotrimer.

The protein resides in the endosome membrane. It localises to the lysosome membrane. Its function is as follows. Negative regulator of late steps of the endocytic pathway. The protein is Vacuolin-B (vacB) of Dictyostelium discoideum (Social amoeba).